A 215-amino-acid polypeptide reads, in one-letter code: Large ribosomal subunit protein bL25 (215 aa).

Positions 190-215 are disordered; the sequence is VLTDAEEETDETPEEPEAIRQKGDEE. The span at 193–205 shows a compositional bias: acidic residues; it reads DAEEETDETPEEP. Over residues 206 to 215 the composition is skewed to basic and acidic residues; sequence EAIRQKGDEE.

It belongs to the bacterial ribosomal protein bL25 family. CTC subfamily. In terms of assembly, part of the 50S ribosomal subunit; part of the 5S rRNA/L5/L18/L25 subcomplex. Contacts the 5S rRNA. Binds to the 5S rRNA independently of L5 and L18.

Functionally, this is one of the proteins that binds to the 5S RNA in the ribosome where it forms part of the central protuberance. The chain is Large ribosomal subunit protein bL25 from Maricaulis maris (strain MCS10) (Caulobacter maris).